The primary structure comprises 856 residues: Alanine/arginine aminopeptidase (856 aa).

Substrate is bound by residues E132 and 264–268; that span reads GAMEN. Position 300 (H300) interacts with Zn(2+). Catalysis depends on E301, which acts as the Proton acceptor. Residues H304 and E323 each contribute to the Zn(2+) site.

It belongs to the peptidase M1 family. It depends on Zn(2+) as a cofactor.

In terms of biological role, positive effector of glycogen accumulation. May be involved in nutrient-sensing. This is Alanine/arginine aminopeptidase (AAP1) from Saccharomyces cerevisiae (strain ATCC 204508 / S288c) (Baker's yeast).